Reading from the N-terminus, the 324-residue chain is MKITILGAGSFGTAIAIALSSISTSINLWGRNHTDMQSITINRKNLKYLPTYELPDNIIPSSSIDEVLSDHNTCIILAVPTQQLRTLCLYVQQHIFEQTPLLICSKGIENISLKFPSEIVKEILPNNPTYILSGPSFAKEIAANLPCTIVLAGENEVLGTSLINKMSNKTFKIVYSKDTLGVQIGAALKNIIAIACGIITGKNLGNNAVASVIAKGMEEIKTLYTAKNETINLSTLIGPSCLGDLILTCTTTHSRNMSFGVAIGQGEDINKMLNKKSEIIEGVSTVKPLISLAEKLNIELPICTSIYNLLYKNVSLDKTISEIL.

Residues Ser10, Phe11, Arg31, and Lys106 each coordinate NADPH. Residues Lys106, Gly134, and Ser136 each coordinate sn-glycerol 3-phosphate. Residue Ala138 coordinates NADPH. The sn-glycerol 3-phosphate site is built by Lys189, Asp244, Ser254, Arg255, and Asn256. The active-site Proton acceptor is Lys189. Arg255 serves as a coordination point for NADPH. Ile279 and Glu281 together coordinate NADPH.

Belongs to the NAD-dependent glycerol-3-phosphate dehydrogenase family.

It localises to the cytoplasm. The enzyme catalyses sn-glycerol 3-phosphate + NAD(+) = dihydroxyacetone phosphate + NADH + H(+). The catalysed reaction is sn-glycerol 3-phosphate + NADP(+) = dihydroxyacetone phosphate + NADPH + H(+). Its pathway is membrane lipid metabolism; glycerophospholipid metabolism. Functionally, catalyzes the reduction of the glycolytic intermediate dihydroxyacetone phosphate (DHAP) to sn-glycerol 3-phosphate (G3P), the key precursor for phospholipid synthesis. The protein is Glycerol-3-phosphate dehydrogenase [NAD(P)+] of Ehrlichia canis (strain Jake).